The primary structure comprises 338 residues: Lipoate-protein ligase A (338 aa).

One can recognise a BPL/LPL catalytic domain in the interval Pro29–Val216. ATP is bound by residues Arg71, Gly76–Phe79, and Lys134. Lys134 lines the (R)-lipoate pocket.

Belongs to the LplA family. As to quaternary structure, monomer.

It localises to the cytoplasm. It catalyses the reaction L-lysyl-[lipoyl-carrier protein] + (R)-lipoate + ATP = N(6)-[(R)-lipoyl]-L-lysyl-[lipoyl-carrier protein] + AMP + diphosphate + H(+). It participates in protein modification; protein lipoylation via exogenous pathway; protein N(6)-(lipoyl)lysine from lipoate: step 1/2. Its pathway is protein modification; protein lipoylation via exogenous pathway; protein N(6)-(lipoyl)lysine from lipoate: step 2/2. Catalyzes both the ATP-dependent activation of exogenously supplied lipoate to lipoyl-AMP and the transfer of the activated lipoyl onto the lipoyl domains of lipoate-dependent enzymes. This chain is Lipoate-protein ligase A, found in Escherichia coli (strain K12 / MC4100 / BW2952).